The primary structure comprises 217 residues: Oxygen regulatory protein NreC (217 aa).

In terms of domain architecture, Response regulatory spans 2–119 (KIVIADDHAV…QLISAVRTVY (118 aa)). D53 is modified (4-aspartylphosphate). One can recognise an HTH luxR-type domain in the interval 148-213 (TNDPFRILSK…ELVEYALKKK (66 aa)). A DNA-binding region (H-T-H motif) is located at residues 172–191 (NKEIAEKLFVSVKTVEAHKT).

Post-translationally, phosphorylated by NreB.

The protein resides in the cytoplasm. In terms of biological role, member of the two-component regulatory system NreB/NreC involved in the control of dissimilatory nitrate/nitrite reduction in response to oxygen. Phosphorylated NreC binds to a GC-rich palindromic sequence at the promoters of the nitrate (narGHJI) and nitrite (nir) reductase operons, as well as the putative nitrate transporter gene narT, and activates their expression. In Staphylococcus carnosus (strain TM300), this protein is Oxygen regulatory protein NreC (nreC).